The sequence spans 296 residues: Ribosomal RNA small subunit methyltransferase A (296 aa).

The S-adenosyl-L-methionine site is built by asparagine 40, valine 42, glycine 67, glutamate 88, aspartate 118, and asparagine 137.

The protein belongs to the class I-like SAM-binding methyltransferase superfamily. rRNA adenine N(6)-methyltransferase family. RsmA subfamily.

The protein resides in the cytoplasm. It catalyses the reaction adenosine(1518)/adenosine(1519) in 16S rRNA + 4 S-adenosyl-L-methionine = N(6)-dimethyladenosine(1518)/N(6)-dimethyladenosine(1519) in 16S rRNA + 4 S-adenosyl-L-homocysteine + 4 H(+). Specifically dimethylates two adjacent adenosines (A1518 and A1519) in the loop of a conserved hairpin near the 3'-end of 16S rRNA in the 30S particle. May play a critical role in biogenesis of 30S subunits. The sequence is that of Ribosomal RNA small subunit methyltransferase A from Rhodococcus opacus (strain B4).